Consider the following 254-residue polypeptide: 3-deoxy-manno-octulosonate cytidylyltransferase (254 aa).

This sequence belongs to the KdsB family.

The protein resides in the cytoplasm. The enzyme catalyses 3-deoxy-alpha-D-manno-oct-2-ulosonate + CTP = CMP-3-deoxy-beta-D-manno-octulosonate + diphosphate. The protein operates within nucleotide-sugar biosynthesis; CMP-3-deoxy-D-manno-octulosonate biosynthesis; CMP-3-deoxy-D-manno-octulosonate from 3-deoxy-D-manno-octulosonate and CTP: step 1/1. It functions in the pathway bacterial outer membrane biogenesis; lipopolysaccharide biosynthesis. Functionally, activates KDO (a required 8-carbon sugar) for incorporation into bacterial lipopolysaccharide in Gram-negative bacteria. The sequence is that of 3-deoxy-manno-octulosonate cytidylyltransferase from Chlamydia pneumoniae (Chlamydophila pneumoniae).